The following is a 297-amino-acid chain: Translocase of chloroplast 33, chloroplastic (297 aa).

The 225-residue stretch at 34–258 (MNSMTVLVLG…HVDKKMVDGS (225 aa)) folds into the AIG1-type G domain. A helical transmembrane segment spans residues 37–53 (MTVLVLGKGGVGKSSTV). Residues 46 to 51 (GVGKSS) and 65 to 70 (SPFQAE) contribute to the GTP site. Mg(2+) contacts are provided by Ser50 and Gln68. Homodimerization regions lie at residues 65-68 (SPFQ) and 125-130 (RLDVYR). His160 is a binding site for GTP. Ser181 bears the Phosphoserine mark. A GTP-binding site is contributed by 208–209 (EN).

Belongs to the TRAFAC class TrmE-Era-EngA-EngB-Septin-like GTPase superfamily. AIG1/Toc34/Toc159-like paraseptin GTPase family. TOC34 subfamily. Homodimer, heterodimer with TOC34 and TOC159, and monomer. The homodimerization and the dimerization with TOC159 require the binding of GTP on Arg-130, and a hypothetical coGAP factor. The dimeric form has a higher GTPase activity than the monomeric form. Part of the TOC core complex that includes 1 protein for the specific recognition of transit peptides surrounded by a ring composed of four proteins forming translocation channels, and four to five GTP-binding proteins providing energy. This core complex can interact with components of the TIC complex to form a larger import complex. Chloroplastic protein precursor such as prSS (precursor of the RuBisCO small subunit) interacts with these complexes. The TOC complex contains a specific subset of polar lipids such as digalactosyldiacylglyceride (DGDG), phosphatidylcholine (PC) and phosphatidylglycerol (PG). Interacts at least with TOC75-3. Forms large complexes including TOC33, pPORA and OEP161 during pPORA import into plastids at the plastid envelope membrane. Interacts with SP1. Mg(2+) is required as a cofactor. In terms of processing, phosphorylated by a kinase present in the outer envelope of chloroplast. When Ser-181 is phosphorylated, the binding to preprotein, GTP and GDP is inhibited, and thus, GTPase activity is repressed. Mostly expressed in seedlings and flowers, and, to a lower extent, in roots, stems, and leaves.

It is found in the plastid. The protein localises to the chloroplast outer membrane. In terms of biological role, GTPase involved in protein precursor import into chloroplasts. Seems to recognize chloroplast-destined precursor proteins and regulate their presentation to the translocation channel through GTP hydrolysis. Binds GTP, GDP, XTP, but not ATP. Probably specialized in the import of nuclear encoded photosynthetic preproteins from the cytoplasm to the chloroplast, especially during early development stages. The protein is Translocase of chloroplast 33, chloroplastic (TOC33) of Arabidopsis thaliana (Mouse-ear cress).